The following is an 890-amino-acid chain: Translation initiation factor IF-2 (890 aa).

Residues 45–303 (LIDHLNQKNS…SLQQGFQKPA (259 aa)) form a disordered region. A compositionally biased stretch (polar residues) spans 67-81 (STLNIPGTGGKSKSV). Over residues 92-217 (VKRDPQEAER…RMAEENKWTD (126 aa)) the composition is skewed to basic and acidic residues. The segment covering 252 to 266 (GRGRNAKAARPKKGN) has biased composition (basic residues). The span at 267 to 280 (KHAESKADREEARA) shows a compositional bias: basic and acidic residues. Positions 389–558 (PRAPVVTIMG…LLQAEVLELK (170 aa)) constitute a tr-type G domain. The tract at residues 398–405 (GHVDHGKT) is G1. 398-405 (GHVDHGKT) is a binding site for GTP. Residues 423–427 (GITQH) form a G2 region. The tract at residues 444 to 447 (DTPG) is G3. GTP is bound by residues 444 to 448 (DTPGH) and 498 to 501 (NKID). Residues 498–501 (NKID) form a G4 region. Residues 534-536 (SAK) are G5. Lys808 bears the N6-acetyllysine mark.

Belongs to the TRAFAC class translation factor GTPase superfamily. Classic translation factor GTPase family. IF-2 subfamily.

The protein resides in the cytoplasm. Its function is as follows. One of the essential components for the initiation of protein synthesis. Protects formylmethionyl-tRNA from spontaneous hydrolysis and promotes its binding to the 30S ribosomal subunits. Also involved in the hydrolysis of GTP during the formation of the 70S ribosomal complex. This is Translation initiation factor IF-2 from Shigella boydii serotype 18 (strain CDC 3083-94 / BS512).